We begin with the raw amino-acid sequence, 499 residues long: Lanosterol 14-alpha demethylase (499 aa).

A helical transmembrane segment spans residues 13–35 (SAVLQMSLTSVLLTASVFTLTLG). Cys441 lines the heme pocket.

It belongs to the cytochrome P450 family. It depends on heme as a cofactor. As to expression, strongly expressed in intestine. Moderately expressed in liver, with higher levels in females compared to males. Also detected at low levels in brain, eye, kidney and testis.

It localises to the endoplasmic reticulum membrane. The protein resides in the membrane. The enzyme catalyses a 14alpha-methyl steroid + 3 reduced [NADPH--hemoprotein reductase] + 3 O2 = a Delta(14) steroid + formate + 3 oxidized [NADPH--hemoprotein reductase] + 4 H2O + 4 H(+). The catalysed reaction is lanosterol + 3 reduced [NADPH--hemoprotein reductase] + 3 O2 = 4,4-dimethyl-5alpha-cholesta-8,14,24-trien-3beta-ol + formate + 3 oxidized [NADPH--hemoprotein reductase] + 4 H2O + 4 H(+). It catalyses the reaction 24,25-dihydrolanosterol + 3 reduced [NADPH--hemoprotein reductase] + 3 O2 = 4,4-dimethyl-8,14-cholestadien-3beta-ol + formate + 3 oxidized [NADPH--hemoprotein reductase] + 4 H2O + 4 H(+). It carries out the reaction a 14alpha-methyl steroid + reduced [NADPH--hemoprotein reductase] + O2 = a 14alpha-hydroxymethyl steroid + oxidized [NADPH--hemoprotein reductase] + H2O + H(+). The enzyme catalyses a 14alpha-hydroxymethyl steroid + reduced [NADPH--hemoprotein reductase] + O2 = a 14alpha-formyl steroid + oxidized [NADPH--hemoprotein reductase] + 2 H2O + H(+). The catalysed reaction is a 14alpha-formyl steroid + reduced [NADPH--hemoprotein reductase] + O2 = a Delta(14) steroid + formate + oxidized [NADPH--hemoprotein reductase] + H2O + 2 H(+). It catalyses the reaction lanosterol + reduced [NADPH--hemoprotein reductase] + O2 = 32-hydroxylanosterol + oxidized [NADPH--hemoprotein reductase] + H2O + H(+). It carries out the reaction 32-hydroxylanosterol + reduced [NADPH--hemoprotein reductase] + O2 = 32-oxolanosterol + oxidized [NADPH--hemoprotein reductase] + 2 H2O + H(+). The enzyme catalyses 32-oxolanosterol + reduced [NADPH--hemoprotein reductase] + O2 = 4,4-dimethyl-5alpha-cholesta-8,14,24-trien-3beta-ol + formate + oxidized [NADPH--hemoprotein reductase] + H2O + 2 H(+). The catalysed reaction is 24,25-dihydrolanosterol + reduced [NADPH--hemoprotein reductase] + O2 = 32-hydroxy-24,25-dihydrolanosterol + oxidized [NADPH--hemoprotein reductase] + H2O + H(+). It catalyses the reaction 32-hydroxy-24,25-dihydrolanosterol + reduced [NADPH--hemoprotein reductase] + O2 = 32-oxo-24,25-dihydrolanosterol + oxidized [NADPH--hemoprotein reductase] + 2 H2O + H(+). It carries out the reaction 32-oxo-24,25-dihydrolanosterol + reduced [NADPH--hemoprotein reductase] + O2 = 4,4-dimethyl-8,14-cholestadien-3beta-ol + formate + oxidized [NADPH--hemoprotein reductase] + H2O + 2 H(+). It participates in steroid biosynthesis; zymosterol biosynthesis; zymosterol from lanosterol: step 1/6. With respect to regulation, inhibited by ketoconazole. May also be inhibited to a lesser extent by propiconazole. Sterol 14alpha-demethylase that plays a critical role in the cholesterol biosynthesis pathway, being cholesterol the major sterol component in deuterostome membranes as well as a precursor for steroid hormone synthesis. Cytochrome P450 monooxygenase that catalyzes the three-step oxidative removal of the 14alpha-methyl group (C-32) of sterols such as lanosterol (lanosta-8,24-dien-3beta-ol) and 24,25-dihydrolanosterol (DHL) in the form of formate, and converts the sterols to 4,4-dimethyl-5alpha-cholesta-8,14,24-trien-3beta-ol and 4,4-dimethyl-8,14-cholestadien-3beta-ol, respectively, which are intermediates of cholesterol biosynthesis. Can also demethylate substrates not intrinsic to deuterostomes, such as eburicol (24-methylene-24,25-dihydrolanosterol), but at a lower rate than DHL. The chain is Lanosterol 14-alpha demethylase from Danio rerio (Zebrafish).